A 307-amino-acid polypeptide reads, in one-letter code: MTSVRHYLQFSDLSPDEYHHLFERSRVLKRRQSAGELHRPLVGKVMSMVFEKNSTRTRVSFEAGMAQLGGHAMFLDTKSSQIGRGEPIEDTARVLSRMSDIIMIRTFEQGLVQRLAAHSRVPVINGLTNEYHPCQVLADIFTYVERHGSIKGKTVAWVGDGNNVCRTWLQAAAVLGFKLKVASPLGYELQTLDGRHYGSDVLEMTRDPARAVHGADIVTTDVFTSMGFEAEQAARREAFEGYQVTAELMKQAKPEALFMHCLPAHRGEEVAAEVIDGPQSVVWDEAENRMHVQKALIEYLLLGHRED.

Residues 54-57 (STRT), Q81, R105, and 132-135 (HPCQ) contribute to the carbamoyl phosphate site. L-ornithine is bound by residues N163, D221, and 225-226 (SM). Residues 261–262 (CL) and R289 contribute to the carbamoyl phosphate site.

Belongs to the aspartate/ornithine carbamoyltransferase superfamily. OTCase family.

It is found in the cytoplasm. The enzyme catalyses carbamoyl phosphate + L-ornithine = L-citrulline + phosphate + H(+). The protein operates within amino-acid biosynthesis; L-arginine biosynthesis; L-arginine from L-ornithine and carbamoyl phosphate: step 1/3. Reversibly catalyzes the transfer of the carbamoyl group from carbamoyl phosphate (CP) to the N(epsilon) atom of ornithine (ORN) to produce L-citrulline. The chain is Ornithine carbamoyltransferase from Chromobacterium violaceum (strain ATCC 12472 / DSM 30191 / JCM 1249 / CCUG 213 / NBRC 12614 / NCIMB 9131 / NCTC 9757 / MK).